The following is a 495-amino-acid chain: Glycerol kinase (495 aa).

Thr13 contacts ADP. The ATP site is built by Thr13, Thr14, and Ser15. Thr13 serves as a coordination point for sn-glycerol 3-phosphate. Arg17 is a binding site for ADP. Sn-glycerol 3-phosphate contacts are provided by Arg83, Glu84, Tyr135, and Asp244. Arg83, Glu84, Tyr135, Asp244, and Gln245 together coordinate glycerol. Residues Thr266 and Gly309 each coordinate ADP. ATP contacts are provided by Thr266, Gly309, Gln313, and Gly410. Positions 410 and 414 each coordinate ADP.

The protein belongs to the FGGY kinase family.

It carries out the reaction glycerol + ATP = sn-glycerol 3-phosphate + ADP + H(+). It participates in polyol metabolism; glycerol degradation via glycerol kinase pathway; sn-glycerol 3-phosphate from glycerol: step 1/1. With respect to regulation, inhibited by fructose 1,6-bisphosphate (FBP). Its function is as follows. Key enzyme in the regulation of glycerol uptake and metabolism. Catalyzes the phosphorylation of glycerol to yield sn-glycerol 3-phosphate. This Shewanella sediminis (strain HAW-EB3) protein is Glycerol kinase.